Consider the following 128-residue polypeptide: Large ribosomal subunit protein bL19 (128 aa).

This sequence belongs to the bacterial ribosomal protein bL19 family.

Functionally, this protein is located at the 30S-50S ribosomal subunit interface and may play a role in the structure and function of the aminoacyl-tRNA binding site. This Bradyrhizobium sp. (strain ORS 278) protein is Large ribosomal subunit protein bL19.